Consider the following 239-residue polypeptide: Ubiquinone biosynthesis O-methyltransferase (239 aa).

S-adenosyl-L-methionine contacts are provided by arginine 45, glycine 64, aspartate 85, and methionine 129.

The protein belongs to the methyltransferase superfamily. UbiG/COQ3 family.

It catalyses the reaction a 3-demethylubiquinol + S-adenosyl-L-methionine = a ubiquinol + S-adenosyl-L-homocysteine + H(+). It carries out the reaction a 3-(all-trans-polyprenyl)benzene-1,2-diol + S-adenosyl-L-methionine = a 2-methoxy-6-(all-trans-polyprenyl)phenol + S-adenosyl-L-homocysteine + H(+). The protein operates within cofactor biosynthesis; ubiquinone biosynthesis. Its function is as follows. O-methyltransferase that catalyzes the 2 O-methylation steps in the ubiquinone biosynthetic pathway. This Nitrosospira multiformis (strain ATCC 25196 / NCIMB 11849 / C 71) protein is Ubiquinone biosynthesis O-methyltransferase.